Here is a 271-residue protein sequence, read N- to C-terminus: MRLYRDNAVVLRQHKLGEADRIVTLLTRQHGLVRAVAKGVRRTKSKFGARLEPFAHIDVQLYPGRNLDIVTQVQTVDAFATDIVDDYSRYTTACAILETAERLAGEERAPAPQLHRLTVGALRAVAEHNRPCELILDAFLLRAMGFAGWAPALDDCARCSAPGPHRAFHVAAGGAVCVHCRPPGAATPSPGVLDLMDALIRGDWASTEDVPESLRGQASGLVAAHLQWHLERQLRTLPLIERARPHAAVRVEDSVRQDGDRDSTTRTSSPA.

The span at 249 to 264 shows a compositional bias: basic and acidic residues; it reads VRVEDSVRQDGDRDST. The interval 249–271 is disordered; it reads VRVEDSVRQDGDRDSTTRTSSPA.

It belongs to the RecO family.

Its function is as follows. Involved in DNA repair and RecF pathway recombination. The chain is DNA repair protein RecO from Rhodococcus jostii (strain RHA1).